Here is a 659-residue protein sequence, read N- to C-terminus: DNA ligase (659 aa).

NAD(+)-binding positions include 32-36, 81-82, and E110; these read DQQYD and SL. Catalysis depends on K112, which acts as the N6-AMP-lysine intermediate. NAD(+)-binding residues include R133, E167, K282, and K306. Zn(2+) contacts are provided by C399, C402, C415, and C420. In terms of domain architecture, BRCT spans 582-659; sequence IKNNIFKNKK…QEHEFEELIK (78 aa).

The protein belongs to the NAD-dependent DNA ligase family. LigA subfamily. The cofactor is Mg(2+). Mn(2+) serves as cofactor.

It carries out the reaction NAD(+) + (deoxyribonucleotide)n-3'-hydroxyl + 5'-phospho-(deoxyribonucleotide)m = (deoxyribonucleotide)n+m + AMP + beta-nicotinamide D-nucleotide.. In terms of biological role, DNA ligase that catalyzes the formation of phosphodiester linkages between 5'-phosphoryl and 3'-hydroxyl groups in double-stranded DNA using NAD as a coenzyme and as the energy source for the reaction. It is essential for DNA replication and repair of damaged DNA. This chain is DNA ligase, found in Phytoplasma mali (strain AT).